Consider the following 102-residue polypeptide: Putative peripheral benzodiazepine receptor-related protein (102 aa).

Ubiquitous.

This chain is Putative peripheral benzodiazepine receptor-related protein (TSPO), found in Homo sapiens (Human).